The primary structure comprises 137 residues: Large-conductance mechanosensitive channel (137 aa).

4 consecutive transmembrane segments (helical) span residues 9-29, 32-52, 54-74, and 79-99; these read AFAV…GAAF, IVSS…IGGV, FGDL…VVLA, and IQSI…VKVI.

It belongs to the MscL family. In terms of assembly, homopentamer.

It localises to the cell inner membrane. In terms of biological role, channel that opens in response to stretch forces in the membrane lipid bilayer. May participate in the regulation of osmotic pressure changes within the cell. In Pseudomonas fluorescens (strain ATCC BAA-477 / NRRL B-23932 / Pf-5), this protein is Large-conductance mechanosensitive channel.